The primary structure comprises 364 residues: Molybdenum import ATP-binding protein ModC (364 aa).

An ABC transporter domain is found at 1-229; sequence MLLIDIKKQL…PLMRPWLNAS (229 aa). 31 to 38 lines the ATP pocket; the sequence is GRSGAGKS. Positions 293 to 360 constitute a Mop domain; the sequence is HSSIRNILPV…IKGVSVTQSD (68 aa).

The protein belongs to the ABC transporter superfamily. Molybdate importer (TC 3.A.1.8) family. As to quaternary structure, the complex is composed of two ATP-binding proteins (ModC), two transmembrane proteins (ModB) and a solute-binding protein (ModA).

It is found in the cell inner membrane. It catalyses the reaction molybdate(out) + ATP + H2O = molybdate(in) + ADP + phosphate + H(+). Part of the ABC transporter complex ModABC involved in molybdenum import. Responsible for energy coupling to the transport system. This chain is Molybdenum import ATP-binding protein ModC, found in Aliivibrio fischeri (strain ATCC 700601 / ES114) (Vibrio fischeri).